A 241-amino-acid polypeptide reads, in one-letter code: Phosphoribosylformylglycinamidine synthase subunit PurQ (241 aa).

The 236-residue stretch at 6 to 241 folds into the Glutamine amidotransferase type-1 domain; it reads NVGIVVFPGS…QSLLLASAFA (236 aa). Catalysis depends on Cys-90, which acts as the Nucleophile. Residues His-207 and Glu-209 contribute to the active site.

As to quaternary structure, part of the FGAM synthase complex composed of 1 PurL, 1 PurQ and 2 PurS subunits.

The protein localises to the cytoplasm. The catalysed reaction is N(2)-formyl-N(1)-(5-phospho-beta-D-ribosyl)glycinamide + L-glutamine + ATP + H2O = 2-formamido-N(1)-(5-O-phospho-beta-D-ribosyl)acetamidine + L-glutamate + ADP + phosphate + H(+). The enzyme catalyses L-glutamine + H2O = L-glutamate + NH4(+). Its pathway is purine metabolism; IMP biosynthesis via de novo pathway; 5-amino-1-(5-phospho-D-ribosyl)imidazole from N(2)-formyl-N(1)-(5-phospho-D-ribosyl)glycinamide: step 1/2. Its function is as follows. Part of the phosphoribosylformylglycinamidine synthase complex involved in the purines biosynthetic pathway. Catalyzes the ATP-dependent conversion of formylglycinamide ribonucleotide (FGAR) and glutamine to yield formylglycinamidine ribonucleotide (FGAM) and glutamate. The FGAM synthase complex is composed of three subunits. PurQ produces an ammonia molecule by converting glutamine to glutamate. PurL transfers the ammonia molecule to FGAR to form FGAM in an ATP-dependent manner. PurS interacts with PurQ and PurL and is thought to assist in the transfer of the ammonia molecule from PurQ to PurL. The chain is Phosphoribosylformylglycinamidine synthase subunit PurQ from Thermosynechococcus vestitus (strain NIES-2133 / IAM M-273 / BP-1).